Consider the following 399-residue polypeptide: MLNRVKLEIKDPMDWNTMYQESEIYSGIHNMNNGLPSNSFLPTDVSTVPTSMPYMSNGLSGPVTSIQGNLGSLGSMTQGMVGSLAPPASTPAYPMGYCQGESEFQRDPRTYRRNYSHAKPPYSYISLITMAIQQAPNKMMTLNEIYQWIIDLFPYYRQNQQRWQNSIRHSLSFNDCFVKVPRSPEKPGKGSYWTLHPESGNMFENGCYLRRQKRFKCERSKSGEREKKVNKPGDENGGSLKETPVGYDDCSSSRSPQAPVNDGGRDSTGSSIHQASGGSPVGLSPTSEQAGTASQLMYPLGLSNDGYLGLVGEDVHLKHDPFSGRHPFSITQLMSSEQDQTYPSKLEMCPTTDHLVHYSNYSSDYHNMASKNGLDMQTSSSTDNGYYANMYSRPILSSL.

Positions 119 to 213 (KPPYSYISLI…ENGCYLRRQK (95 aa)) form a DNA-binding region, fork-head. Over residues 219-234 (RSKSGEREKKVNKPGD) the composition is skewed to basic and acidic residues. Positions 219 to 290 (RSKSGEREKK…VGLSPTSEQA (72 aa)) are disordered. Residues 267 to 277 (STGSSIHQASG) are compositionally biased toward polar residues.

The protein resides in the nucleus. Transcriptional repressor involved in embryonic nervous system development. Plays a role in the induction and patterning of the anterior-posterior neural axis. Involved in the establishment of floor plate differentiation from neural plate cells during gastrulation. Binds the anf1 promoter sequence to restrict expression of anf1 to the anterior of the neural plate, thereby patterning the forebrain. Can bind to the HNF-3-alpha DNA target sequence. Cooperates with t/bra in a dose-dependent manner to specify dorsal mesoderm formation, including notochord. May be involved in the dorso-ventral patterning of the mesoderm. Binds to DNA via the target sequence 5'-[GA]TAAA[TC]A-3', with 5'-GTAAATA-3' being the preferred binding site. The protein is Forkhead box protein A4 of Xenopus tropicalis (Western clawed frog).